The sequence spans 285 residues: MLRIAVPNKGSLSGPAAEMLHEAGYQQRRESKELRIVDPENEVEFFYLRPRDIAIYVSSGRLDIGLTGRDLLIDSGANAEEILPLGFARSTFRFAGKPGTAKGIEDLAGLTVATSYEGIVAKHLADSGIDASVVHLDGAVETAIELGVAEVIADVVETGTSLRNAGLEVFGEPIMKSEAVVIRRVGAGTDEAAESKVQQFLRRLQGVLVARTYVMMDYDCRAEHLEKAVALTPGLESPTISPLHNEGWVAVRAMVPAKEAQRIMDDLYALGARAILTTAIHACRL.

The protein belongs to the ATP phosphoribosyltransferase family. Long subfamily. The cofactor is Mg(2+).

The protein resides in the cytoplasm. It catalyses the reaction 1-(5-phospho-beta-D-ribosyl)-ATP + diphosphate = 5-phospho-alpha-D-ribose 1-diphosphate + ATP. It participates in amino-acid biosynthesis; L-histidine biosynthesis; L-histidine from 5-phospho-alpha-D-ribose 1-diphosphate: step 1/9. Its activity is regulated as follows. Feedback inhibited by histidine. Its function is as follows. Catalyzes the condensation of ATP and 5-phosphoribose 1-diphosphate to form N'-(5'-phosphoribosyl)-ATP (PR-ATP). Has a crucial role in the pathway because the rate of histidine biosynthesis seems to be controlled primarily by regulation of HisG enzymatic activity. The chain is ATP phosphoribosyltransferase from Streptomyces avermitilis (strain ATCC 31267 / DSM 46492 / JCM 5070 / NBRC 14893 / NCIMB 12804 / NRRL 8165 / MA-4680).